The following is a 1135-amino-acid chain: MVDLESEVPPLPPRYRFRDLLLGDQGWQNDDRVQVEFYMNENTFKERLKLFFIKNQRSSLRIRLFNFSLKLLSCLLYIIRVLLEKPSQGSEWSHIFWVNRSLPLWGLQVSVALISLFETILLGYLSYKGNIWEQILRIPFILEIINAVPFIISIFWPTLRNLFVPVFLNCWLAKHALENMINDLHRAIQRTQSAMFNQVLILISTLLCLIFTCICGIQHLERIGKKLNLFDSLYFCIVTFSTVGFGDVTPETWSSKLFVVAMICVALVVLPIQFEQLAYLWMERQKSGGNYSRHRAQTEKHVVLCVSSLKIDLLMDFLNEFYAHPRLQDYYVVILCPTEMDVQVRRVLQIPMWSQRVIYLQGSALKDQDLLRAKMDNAEACFILSSRCEVDRTSSDHQTILRAWAVKDFAPNCPLYVQILKPENKFHIKFADHVVCEEEFKYAMLALNCICPATSTLITLLVHTSRGQEGQQSPEQWQKTYGRCSGNEVYHIVLEESTFFAEYEGKSFTYASFHAHKKFGVCLVGVRREDNKNILLNPGPRYIMNASDICFYINITKEENSAFKNQDQQRKSNVSRSFYHGPSRLPVHSIIASMGTVAIDLQDTSCRATSGPTLALPSEGGKELRRPSIAPVLEVADTSSIQTCDLLSDQSEDETTPDEETSSNLEYAKGYPPYSPYIGSSPTFCHLLQEKVPFCCLRLDKSCQHNYYEDAKAYGFKNKLIIVAAETAGNGLYNFIVPLRAYYRPKKELNPIVLLLDNPPDMHFLDAICWFPMVYYMVGSIDNLDDLLRCGVTFAANMVVVDKESTMSAEEDYMADAKTIVNVQTLFRLFSSLSIITELTHPANMRFMQFRAKDCYSLALSKLEKKERERGSNLAFMFRLPFAAGRVFSISMLDTLLYQSFVKDYMISITRLLLGLDTIPGSGFLCSMKITEDDLWIRTYARLYQKLCSSTGDVPIGIYRTESQKLTTSESQISISVEEWEDTKDVKDPGHHRSLHRNSTSSDQSDHPLLRRKSMQWARRLSRKGPKHSGKTAEKITQQRLNLYRRSERQELAELVKNRMKHLGLSTVGYDEMNDHQSTLSYILINPSPDTRLELNDVVYLIRPDPLSYLPNSEPSRKNSICNAAVQDSREETQL.

At 1 to 63 (MVDLESEVPP…KNQRSSLRIR (63 aa)) the chain is on the cytoplasmic side. Residues 64-84 (LFNFSLKLLSCLLYIIRVLLE) form a helical membrane-spanning segment. Topologically, residues 85-101 (KPSQGSEWSHIFWVNRS) are extracellular. The helical transmembrane segment at 102-122 (LPLWGLQVSVALISLFETILL) threads the bilayer. Over 123–137 (GYLSYKGNIWEQILR) the chain is Cytoplasmic. Residues 138 to 158 (IPFILEIINAVPFIISIFWPT) traverse the membrane as a helical segment. The Extracellular segment spans residues 159-164 (LRNLFV). A helical transmembrane segment spans residues 165 to 185 (PVFLNCWLAKHALENMINDLH). Residues 186–198 (RAIQRTQSAMFNQ) lie on the Cytoplasmic side of the membrane. Residues 199–219 (VLILISTLLCLIFTCICGIQH) traverse the membrane as a helical segment. The Extracellular segment spans residues 220 to 228 (LERIGKKLN). The segment at residues 229–249 (LFDSLYFCIVTFSTVGFGDVT) is an intramembrane region (pore-forming). The Extracellular portion of the chain corresponds to 250 to 256 (PETWSSK). The chain crosses the membrane as a helical span at residues 257-277 (LFVVAMICVALVVLPIQFEQL). The Cytoplasmic portion of the chain corresponds to 278–1135 (AYLWMERQKS…VQDSREETQL (858 aa)). RCK N-terminal domains follow at residues 299-435 (EKHV…DHVV) and 718-858 (NKLI…CYSL). Disordered stretches follow at residues 982–1036 (DTKD…AEKI) and 1111–1135 (PNSE…ETQL). The segment covering 1010–1030 (LRRKSMQWARRLSRKGPKHSG) has biased composition (basic residues). Residues 1111–1122 (PNSEPSRKNSIC) show a composition bias toward polar residues.

Belongs to the potassium channel family. Calcium-activated (TC 1.A.1.3) subfamily. KCa4.2/KCNT2 sub-subfamily. As to quaternary structure, homotetramer. Forms heteromeric channels with KCNT1. These heterodimer channels differ from the homomers in their unitary conductance, kinetic behavior, subcellular localization, and response to activation of protein kinase C. Phosphorylated by protein kinase C. Phosphorylation of the C-terminal domain inhibits channel activity. In terms of tissue distribution, within the dorsal root ganglia (DRGs), exclusively expressed in small-sized and medium-sized calcitonin gene-related peptide (CGRP)-containing DRG neurons.

The protein localises to the cell membrane. It catalyses the reaction K(+)(in) = K(+)(out). With respect to regulation, are normally in a closed state unless activated by an increase in intracellular Na(+) and Cl(-). Inhibited upon stimulation of G-protein coupled receptors, such as CHRM1 and GRM1. There is conflicting data about the effect of ATP on KNCT2 channels activity. Intracellular ATP was initially report to inhibit the channel activity. However, others studies conclude that KNCT2 channels are not inhibited by intracellular ATP. Sodium-activated and chloride-activated potassium channel. Produces rapidly activating outward rectifier K(+) currents. Contributes to regulate neuronal excitability. In Mus musculus (Mouse), this protein is Potassium channel subfamily T member 2 (Kcnt2).